The sequence spans 316 residues: Acetyl-coenzyme A carboxylase carboxyl transferase subunit beta (316 aa).

The CoA carboxyltransferase N-terminal domain occupies Leu-39–Met-308. Positions 43, 46, 62, and 65 each coordinate Zn(2+). The C4-type zinc-finger motif lies at Cys-43 to Cys-65.

This sequence belongs to the AccD/PCCB family. Acetyl-CoA carboxylase is a heterohexamer composed of biotin carboxyl carrier protein (AccB), biotin carboxylase (AccC) and two subunits each of ACCase subunit alpha (AccA) and ACCase subunit beta (AccD). The cofactor is Zn(2+).

The protein localises to the cytoplasm. It carries out the reaction N(6)-carboxybiotinyl-L-lysyl-[protein] + acetyl-CoA = N(6)-biotinyl-L-lysyl-[protein] + malonyl-CoA. It functions in the pathway lipid metabolism; malonyl-CoA biosynthesis; malonyl-CoA from acetyl-CoA: step 1/1. In terms of biological role, component of the acetyl coenzyme A carboxylase (ACC) complex. Biotin carboxylase (BC) catalyzes the carboxylation of biotin on its carrier protein (BCCP) and then the CO(2) group is transferred by the transcarboxylase to acetyl-CoA to form malonyl-CoA. This chain is Acetyl-coenzyme A carboxylase carboxyl transferase subunit beta, found in Nostoc punctiforme (strain ATCC 29133 / PCC 73102).